The following is a 911-amino-acid chain: Protein translocase subunit SecA (911 aa).

Residues Gln-87, 105–109 (GEGKT), and Asp-512 contribute to the ATP site. The disordered stretch occupies residues 865 to 892 (AAEQDGAEEGAVATATAPVRSENKVGRN). A compositionally biased stretch (low complexity) spans 873 to 883 (EGAVATATAPV). Zn(2+)-binding residues include Cys-895, Cys-897, Cys-906, and His-907.

It belongs to the SecA family. In terms of assembly, monomer and homodimer. Part of the essential Sec protein translocation apparatus which comprises SecA, SecYEG and auxiliary proteins SecDF-YajC and YidC. Zn(2+) serves as cofactor.

It is found in the cell inner membrane. It localises to the cytoplasm. It catalyses the reaction ATP + H2O + cellular proteinSide 1 = ADP + phosphate + cellular proteinSide 2.. Its function is as follows. Part of the Sec protein translocase complex. Interacts with the SecYEG preprotein conducting channel. Has a central role in coupling the hydrolysis of ATP to the transfer of proteins into and across the cell membrane, serving both as a receptor for the preprotein-SecB complex and as an ATP-driven molecular motor driving the stepwise translocation of polypeptide chains across the membrane. This chain is Protein translocase subunit SecA, found in Ectopseudomonas mendocina (strain ymp) (Pseudomonas mendocina).